The primary structure comprises 821 residues: Pentatricopeptide repeat-containing protein At4g04790, mitochondrial (821 aa).

The N-terminal 74 residues, 1–74, are a transit peptide targeting the mitochondrion; that stretch reads MVVSKVNKSL…KLLHVTTSDK (74 aa). PPR repeat units follow at residues 372–406, 407–441, 442–476, 477–511, 512–542, 544–574, and 578–612; these read SSTS…GLMI, SADI…SVKP, NTEN…NLEP, NSSM…GVKP, DSIT…AGVQ, TKRI…PDVP, and QNEL…ECHV. The disordered stretch occupies residues 801–821; it reads AFSQAPNKKKPKKKMIVLSTK.

The protein belongs to the PPR family. P subfamily.

The protein localises to the mitochondrion. The polypeptide is Pentatricopeptide repeat-containing protein At4g04790, mitochondrial (Arabidopsis thaliana (Mouse-ear cress)).